The primary structure comprises 256 residues: Undecaprenyl-diphosphatase (256 aa).

The next 7 helical transmembrane spans lie at 8 to 28 (VLGI…GHLI), 41 to 61 (FVKS…VVLY), 75 to 95 (IIAA…LIKG), 96 to 116 (FLIG…IILI), 175 to 195 (AEFS…YDLI), 208 to 228 (ILII…KWFL), and 236 to 256 (LKIF…FFLF).

It belongs to the UppP family.

It is found in the cell inner membrane. It carries out the reaction di-trans,octa-cis-undecaprenyl diphosphate + H2O = di-trans,octa-cis-undecaprenyl phosphate + phosphate + H(+). Functionally, catalyzes the dephosphorylation of undecaprenyl diphosphate (UPP). Confers resistance to bacitracin. This Aquifex aeolicus (strain VF5) protein is Undecaprenyl-diphosphatase.